Here is a 983-residue protein sequence, read N- to C-terminus: Inner tegument protein (983 aa).

Residues 474–983 form an interaction with large tegument protein region; the sequence is LNVNTHFAVQ…TSVSLPPASP (510 aa). Residues 902-932 are disordered; it reads PWESAPQPPRLRMTPDTDHEESTAGATSVPE. A compositionally biased stretch (basic and acidic residues) spans 914-923; it reads MTPDTDHEES.

It belongs to the herpesviridae inner tegument protein family. In terms of assembly, interacts (via C-terminus) with the large tegument protein/LTP (via N-terminus).

The protein localises to the virion tegument. Its subcellular location is the host cytoplasm. The protein resides in the host nucleus. It localises to the host Golgi apparatus. It is found in the host trans-Golgi network. In terms of biological role, plays an essential role in cytoplasmic secondary envelopment during viral egress. Interacts with the capsid via the large tegument protein/LTP and participates in its transport to the host trans-Golgi network (TGN) where secondary envelopment occurs. Modulates tegumentation and capsid accumulation at the viral assembly complex. The sequence is that of Inner tegument protein (UL47) from Homo sapiens (Human).